Reading from the N-terminus, the 111-residue chain is Iron-sulfur cluster insertion protein ErpA (111 aa).

Iron-sulfur cluster-binding residues include cysteine 39, cysteine 103, and cysteine 105.

Belongs to the HesB/IscA family. Homodimer. Iron-sulfur cluster is required as a cofactor.

Required for insertion of 4Fe-4S clusters for at least IspG. This chain is Iron-sulfur cluster insertion protein ErpA, found in Acinetobacter baumannii (strain AB307-0294).